The chain runs to 101 residues: uncharacterized protein (101 aa).

It is found in the cytoplasm. This is an uncharacterized protein from Saccharomyces cerevisiae (strain ATCC 204508 / S288c) (Baker's yeast).